The sequence spans 444 residues: Tubulin beta chain (444 aa).

An MREI motif motif is present at residues 1-4; it reads MREI. Position 11 (Gln11) interacts with GTP. Ser40 is modified (phosphoserine). Thr55 is modified (phosphothreonine). Lys58 bears the N6-acetyllysine; alternate mark. The residue at position 58 (Lys58) is an N6-succinyllysine; alternate. Lys58 is covalently cross-linked (Glycyl lysine isopeptide (Lys-Gly) (interchain with G-Cter in ubiquitin); alternate). GTP contacts are provided by Glu69, Ser138, Gly142, Thr143, and Gly144. Glu69 is a Mg(2+) binding site. Ser172 is modified (phosphoserine; by CDK1). GTP contacts are provided by Asn204 and Asn226. Thr285 and Thr290 each carry phosphothreonine. Residue Arg318 is modified to Omega-N-methylarginine. Lys324 is covalently cross-linked (Glycyl lysine isopeptide (Lys-Gly) (interchain with G-Cter in ubiquitin)). Positions 423 to 444 are disordered; it reads QQYQDATAEEEEDFGEEAEEEA. Over residues 429–444 the composition is skewed to acidic residues; the sequence is TAEEEEDFGEEAEEEA. 5-glutamyl polyglutamate occurs at positions 434, 438, 439, and 441. 5 positions are modified to 5-glutamyl glycine: Glu438, Glu439, Glu441, Glu442, and Glu443.

This sequence belongs to the tubulin family. As to quaternary structure, heterodimer of alpha and beta chains. A typical microtubule is a hollow water-filled tube with an outer diameter of 25 nm and an inner diameter of 15 nM. Alpha-beta heterodimers associate head-to-tail to form protofilaments running lengthwise along the microtubule wall with the beta-tubulin subunit facing the microtubule plus end conferring a structural polarity. Microtubules usually have 13 protofilaments but different protofilament numbers can be found in some organisms and specialized cells. Interacts with CIMAP3. Interacts with DIAPH1. Interacts with MX1. May interact with RNABP10. Interacts with CFAP157. Nascent tubulin polypeptide interacts (via beta-tubulin MREI motif) with TTC5/STRAP; this interaction results in tubulin mRNA-targeted degradation. The cofactor is Mg(2+). Post-translationally, some glutamate residues at the C-terminus are polyglycylated, resulting in polyglycine chains on the gamma-carboxyl group. Glycylation is mainly limited to tubulin incorporated into axonemes (cilia and flagella) whereas glutamylation is prevalent in neuronal cells, centrioles, axonemes, and the mitotic spindle. Both modifications can coexist on the same protein on adjacent residues, and lowering polyglycylation levels increases polyglutamylation, and reciprocally. Cilia and flagella glycylation is required for their stability and maintenance. Flagella glycylation controls sperm motility. In terms of processing, some glutamate residues at the C-terminus are polyglutamylated, resulting in polyglutamate chains on the gamma-carboxyl group. Polyglutamylation plays a key role in microtubule severing by spastin (SPAST). SPAST preferentially recognizes and acts on microtubules decorated with short polyglutamate tails: severing activity by SPAST increases as the number of glutamates per tubulin rises from one to eight, but decreases beyond this glutamylation threshold. Glutamylation is also involved in cilia motility. Phosphorylated on Ser-172 by CDK1 during the cell cycle, from metaphase to telophase, but not in interphase. This phosphorylation inhibits tubulin incorporation into microtubules.

Its subcellular location is the cytoplasm. The protein resides in the cytoskeleton. Functionally, tubulin is the major constituent of microtubules, a cylinder consisting of laterally associated linear protofilaments composed of alpha- and beta-tubulin heterodimers. Microtubules grow by the addition of GTP-tubulin dimers to the microtubule end, where a stabilizing cap forms. Below the cap, tubulin dimers are in GDP-bound state, owing to GTPase activity of alpha-tubulin. This Sus scrofa (Pig) protein is Tubulin beta chain (TUBB).